Reading from the N-terminus, the 448-residue chain is Beclin-1 (448 aa).

An N-acetylmethionine modification is found at M1. 2 positions are modified to phosphoserine: S14 and S29. 3 positions are modified to phosphoserine; by AMPK: S88, S91, and S94. The BH3 signature appears at 106 to 125 (TMENLSRRLKVTGDLFDIMS). An interaction with BCL2 and BCL2L1 region spans residues 110-157 (LSRRLKVTGDLFDIMSGQTDVDHPLCEECTDTLLDQLDTQLNVTENEC). Position 117 is a phosphothreonine; by DAPK1 (T117). A coiled-coil region spans residues 140–267 (DTLLDQLDTQ…QLDKLKKTNV (128 aa)). The segment at 243-448 (DELKSVENQM…AWVSSQFYNK (206 aa)) is evolutionary conserved domain (ECD). Glycyl lysine isopeptide (Lys-Gly) (interchain with G-Cter in ubiquitin) cross-links involve residues K400 and K435. A required for membrane-association region spans residues 423 to 448 (WTKALKFMLTNLKWGLAWVSSQFYNK).

This sequence belongs to the beclin family. In terms of assembly, a homodimeric form is proposed to exist; this metastable form readily transits to ATG14- or UVRAG-containing complexes with BECN1:UVRAG being more stable than BECN1:ATG14. Component of the PI3K (PI3KC3/PI3K-III/class III phosphatidylinositol 3-kinase) complex the core of which is composed of the catalytic subunit PIK3C3, the regulatory subunit PIK3R4 and BECN1 associating with additional regulatory/auxiliary subunits to form alternative complex forms. Alternative complex forms containing a fourth regulatory subunit in a mutually exclusive manner are PI3K complex I (PI3KC3-C1) containing ATG14, and PI3K complex II (PI3KC3-C2) containing UVRAG. PI3KC3-C1 displays a V-shaped architecture with PIK3R4 serving as a bridge between PIK3C3 and the ATG14:BECN1 subcomplex. Both, PI3KC3-C1 and PI3KC3-C2, can associate with further regulatory subunits, such as RUBCN, SH3GLB1/Bif-1 and AMBRA1. PI3KC3-C1 probably associates with PIK3CB. Forms a complex with PPP2CA and AMBRA1; AMBRA1 and BECN1 components of the complex regulate MYC stability via different pathways. Component of the complex, at least composed of LRPPRC, BECN1 and BCL2; the interactions prevent BECN1 from forming an autophagy-inducing complex with PIK3C3. Interacts with AMBRA1, GOPC, GRID2. Interacts with BCL2 and BCL2L1 isoform Bcl-X(L); the interaction inhibits BECN1 function in promoting autophagy by interfering with the formation of the PI3K complex. Interacts with cytosolic HMGB1; inhibits the interaction of BECN1 and BCL2 leading to promotion of autophagy. Interacts with USP10, USP13, VMP1, DAPK1, RAB39A. Interacts with the poly-Gln domain of ATXN3; the interaction causes deubiquitination at Lys-400 and stabilizes BECN1. Interacts with SLAMF1. Interacts with TRIM5; the interaction causes activation of BECN1 by causing its dissociation from its inhibitors BCL2 and TAB2. Interacts with active ULK1 (phosphorylated on 'Ser-317') and MEFV simultaneously. Interacts with WDR81 and WDR91; negatively regulates the PI3 kinase/PI3K activity associated with endosomal membranes. Interacts with LAPTM4B; competes with EGFR for LAPTM4B binding; regulates EGFR activity. Interacts with TRIM50. Interacts with TRIM16. Interacts with ATG14; this interaction is increased in the absence of TMEM39A. Interacts with WASHC1; preventing interaction with AMBRA1 and the DCX(AMBRA1) complex and subsequent ubiquitination. Interacts with TRIM17. Interacts with BCL2L10/BCL-B (via BH1 domain). Interacts with SH3BGRL. Interacts with IRGM; enhancing BECN1-interacting partners and influencing the composition of the BECN1 complex. Interacts with ARMC3. Interacts with LRPPRC. (Microbial infection) Interacts with African swine fever virus (ASFV) apoptosis regulator Bcl-2 homolog; this interaction allows the virus to inhibit BECN1, and thus autophagy. Post-translationally, phosphorylation at Thr-117 by DAPK1 reduces its interaction with BCL2 and BCL2L1 and promotes induction of autophagy. In response to autophagic stimuli, phosphorylated at serine residues by AMPK in an ATG14-dependent manner, and this phosphorylation is critical for maximally efficient autophagy. In terms of processing, polyubiquitinated by NEDD4, both with 'Lys-11'- and 'Lys-63'-linkages. 'Lys-11'-linked polyubiquitination leads to degradation and is enhanced when the stabilizing interaction partner VPS34 is depleted. Deubiquitinated by USP10 and USP13, leading to stabilize the PIK3C3/VPS34-containing complexes. Polyubiquitinated at Lys-400 with 'Lys-48'-linkages. 'Lys-48'-linked polyubiquitination of Lys-400 leads to degradation. Deubiquitinated by ATXN3, leading to stabilization. Ubiquitinated at Lys-435 via 'Lys-63'-linkage by the DCX(AMBRA1) complex, thereby increasing the association between BECN1 and PIK3C3 to promote PIK3C3 activity. 'Lys-48'-linked ubiquitination by RNF216 leads to proteasomal degradation and autophagy inhibition. Proteolytically processed by caspases including CASP8 and CASP3; the C-terminal fragments lack autophagy-inducing capacity and are proposed to induce apoptosis. Thus the cleavage is proposed to be an determinant to switch from autophagy to apoptosis pathways affecting cellular homeostasis including viral infections and survival of tumor cells.

Its subcellular location is the cytoplasm. It is found in the golgi apparatus. The protein localises to the trans-Golgi network membrane. It localises to the endosome membrane. The protein resides in the endoplasmic reticulum membrane. Its subcellular location is the mitochondrion membrane. It is found in the cytoplasmic vesicle. The protein localises to the autophagosome. It localises to the mitochondrion. The protein resides in the nucleus. Plays a central role in autophagy. Acts as a core subunit of the PI3K complex that mediates formation of phosphatidylinositol 3-phosphate; different complex forms are believed to play a role in multiple membrane trafficking pathways: PI3KC3-C1 is involved in initiation of autophagosomes and PI3KC3-C2 in maturation of autophagosomes and endocytosis. Involved in regulation of degradative endocytic trafficking and required for the abscission step in cytokinesis, probably in the context of PI3KC3-C2. Essential for the formation of PI3KC3-C2 but not PI3KC3-C1 PI3K complex forms. Involved in endocytosis. May play a role in antiviral host defense. Its function is as follows. Beclin-1-C 35 kDa localized to mitochondria can promote apoptosis; it induces the mitochondrial translocation of BAX and the release of proapoptotic factors. This is Beclin-1 (BECN1) from Sus scrofa (Pig).